The sequence spans 373 residues: RNA cytidine acetyltransferase (373 aa).

Residue Arg53 participates in ATP binding. Acetyl-CoA is bound by residues 216 to 218 (IAT) and 223 to 229 (TGMGYGS). Positions 246 to 271 (GEFEEENEAAKPADEESDDESNLLKE) are disordered. Arg313 provides a ligand contact to acetyl-CoA.

Belongs to the RNA cytidine acetyltransferase family. NAT10 subfamily.

The protein localises to the nucleus. The protein resides in the nucleolus. The enzyme catalyses a cytidine in 18S rRNA + acetyl-CoA + ATP + H2O = an N(4)-acetylcytidine in 18S rRNA + ADP + phosphate + CoA + H(+). It catalyses the reaction a cytidine in tRNA + acetyl-CoA + ATP + H2O = an N(4)-acetylcytidine in tRNA + ADP + phosphate + CoA + H(+). In terms of biological role, RNA cytidine acetyltransferase with specificity toward both 18S rRNA and tRNAs. Catalyzes the formation of N(4)-acetylcytidine (ac4C) in 18S rRNA. Required for early nucleolar cleavages of precursor rRNA at sites A0, A1 and A2 during 18S rRNA synthesis. Catalyzes the formation of ac4C in serine and leucine tRNAs. Requires a tRNA-binding adapter protein for full tRNA acetyltransferase activity but not for 18S rRNA acetylation. This Achlya ambisexualis (Water mold) protein is RNA cytidine acetyltransferase.